Consider the following 100-residue polypeptide: Small ribosomal subunit protein uS14c (100 aa).

Belongs to the universal ribosomal protein uS14 family. In terms of assembly, part of the 30S ribosomal subunit.

Its subcellular location is the plastid. The protein resides in the chloroplast. Binds 16S rRNA, required for the assembly of 30S particles. In Arabis hirsuta (Hairy rock-cress), this protein is Small ribosomal subunit protein uS14c.